Reading from the N-terminus, the 2209-residue chain is MGAQVSSQKVGAHENSNRAYGGSTINYTTINYYRDSASNAASKQDFSQDPSKFTEPIKDVLIKTAPMLNSPNIEACGYSDRVLQLTLGNSTITTQEAANSVVAYGRWPEYLRDSEANPVDQPTEPDVAACRFYTLDTVSWTKESRGWWWKLPDALRDMGLFGQNMYYHYLGRSGYTVHVQCNASKFHQGALGVFAVPEMCLAGDSNTTTMHTSYQNANPGEKGGTFTGTFTPDNNQTSPARRFCPVDYLLGNGTLLGNAFVFPHQIINLRTNNCATLVLPYVNSLSIDSMVKHNNWGIAILPLAPLNFASESSPEIPITLTIAPMCCEFNGLRNITLPRLQGLPVMNTPGSNQYLTADNFQSPCALPEFDVTPPIDIPGEVKNMMELAEIDTMIPFDLSATKKNTMEMYRVRLSDKPHTDDPILCLSLSPASDPRLSHTMLGEILNYYTHWAGSLKFTFLFCGFMMATGKLLVSYAPPGADPPKKRKEAMLGTHVIWDIGLQSSCTMVVPWISNTTYRQTIDDSFTEGGYISVFYQTRIVVPLSTPREMDILGFVSACNDFSVRLLRDTTHIEQKALAQGLGQMLESMIDNTVRETVGAATSRDALPNTEASGPTHSKEIPALTAVETGATNPLVPSDTVQTRHVVQHRSRSESSIESFFARGACVTIMTVDNPASTTNKDKLFAVWKITYKDTVQLRRKLEFFTYSRFDMELTFVVTANFTETNNGHALNQVYQIMYVPPGAPVPEKWDDYTWQTSSNPSIFYTYGTAPARISVPYVGISNAYSHFYDGFSKVPLKDQSAALGDSLYGAASLNDFGILAVRVVNDHNPTKVTSKIRVYLKPKHIRVWCPRPPRAVAYYGPGVDYKDGTLTPLSTKDLTTYGFGHQNKAVYTAGYKICNYHLATQDDLQNAVNVMWSRDLLVTESRAQGTDSIARCNCNAGVYYCESRRKYYPVSFVGPTFQYMEANNYYPARYQSHMLIGHGFASPGDCGGILRCHHGVIGIITAGGEGLVAFSDIRDLYAYEEEAMEQGITNYIESLGAAFGSGFTQQISDKITELTNMVTSTITEKLLKNLIKIISSLVIITRNYEDTTTVLATLALLGCDASPWQWLRKKACDVLEIPYVIKQGDSWLKKFTEACNAAKGLEWVSNKISKFIDWLKEKIIPQARDKLEFVTKLRQLEMLENQISTIHQSCPSQEHQEILFNNVRWLSIQSKRFAPLYAVEAKRIQKLEHTINNYIQFKSKHRIEPVCLLVHGSPGTGKSVATNLIARAIAERENTSTYSLPPDPSHFDGYKQQGVVIMDDLNQNPDGADMKLFCQMVSTVEFIPPMASLEEKGILFTSNYVLASTNSSRISPPTVAHSDALARRFAFDMDIQVMNEYSRDGKLNMAMATEMCKNCHQPANFKRCCPLVCGKAIQLMDKSSRVRYSIDQITTMIINERNRRSNIGNCMEALFQGPLQYKDLKIDIKTSPPPECINDLLQAVDSQEVRDYCEKKGWIVNITSQVQTERNINRAMTILQAVTTFAAVAGVVYVMYKLFAGHQGAYTGLPNKKPNVPTIRTAKVQGPGFDYAVAMAKRNIVTATTSKGEFTMLGVHDNVAILPTHASPGESIVIDGKEVEILDAKALEDQAGTNLEITIITLKRNEKFRDIRPHIPTQITETNDGVLIVNTSKYPNMYVPVGAVTEQGYLNLGGRQTARTLMYNFPTRAGQCGGVITCTGKVIGMHVGGNGSHGFAAALKRSYFTQSQGEIQWMRPSKEVGYPIINAPSKTKLEPSAFHYVFEGVKEPAVLTKNDPRLKTDFEEAIFSKYVGNKITEVDEYMKEAVDHYAGQLMSLDINTEQMCLEDAMYGTDGLEALDLSTSAGYPYVAMGKKKRDILNKQTRDTKEMQKLLDTYGINLPLVTYVKDELRSKTKVEQGKSRLIEASSLNDSVAMRMAFGNLYAAFHKNPGVITGSAVGCDPDLFWSKIPVLMEEKLFAFDYTGYDASLSPAWFEALKMVLEKIGFGDRVDYIDYLNHSHHLYKNKTYCVKGGMPSGCSGTSIFNSMINNLIIRTLLLKTYKGIDLDHLKMIAYGDDVIASYPHEVDASLLAQSGKDYGLTMTPADKSATFETVTWENVTFLKRFFRADEKYPFLIHPVMPMKEIHESIRWTKDPRNTQDHVRSLCLLAWHNGEEEYNKFLAKIRSVPIGRALLLPEYSTLYRRWLDSF.

A lipid anchor (N-myristoyl glycine; by host) is attached at G2. Residues 2-1520 (GAQVSSQKVG…NINRAMTILQ (1519 aa)) lie on the Cytoplasmic side of the membrane. Residues 580 to 600 (GLGQMLESMIDNTVRETVGAA) are amphipathic alpha-helix. Positions 599-619 (AATSRDALPNTEASGPTHSKE) are disordered. Residues H901 and D919 each act as for protease 2A activity in the active site. 2 residues coordinate Zn(2+): C936 and C938. C990 (for protease 2A activity) is an active-site residue. Zn(2+)-binding residues include C996 and H998. Residues 1128-1200 (GDSWLKKFTE…HQSCPSQEHQ (73 aa)) form a membrane-binding region. The interval 1128–1266 (GDSWLKKFTE…SPGTGKSVAT (139 aa)) is oligomerization. The tract at residues 1149–1153 (SNKIS) is RNA-binding. The 157-residue stretch at 1232-1388 (EHTINNYIQF…NEYSRDGKLN (157 aa)) folds into the SF3 helicase domain. 1256–1263 (GSPGTGKS) provides a ligand contact to ATP. Zn(2+) is bound by residues C1396, C1399, C1408, and C1413. A C4-type zinc finger spans residues 1396-1413 (CKNCHQPANFKRCCPLVC). The tract at residues 1440–1447 (ERNRRSNI) is RNA-binding. Positions 1451–1456 (MEALFQ) are oligomerization. Residues 1521 to 1536 (AVTTFAAVAGVVYVMY) lie within the membrane without spanning it. Residues 1537-2209 (KLFAGHQGAY…TLYRRWLDSF (673 aa)) are Cytoplasmic-facing. An O-(5'-phospho-RNA)-tyrosine modification is found at Y1546. At Y1546 the chain carries O-UMP-tyrosine; transient. Positions 1566–1744 (GPGFDYAVAM…FAAALKRSYF (179 aa)) constitute a Peptidase C3 domain. Active-site for protease 3C activity residues include H1605, E1636, and C1712. One can recognise a RdRp catalytic domain in the interval 1975–2090 (EKLFAFDYTG…SYPHEVDASL (116 aa)). Positions 1981 and 2076 each coordinate Mg(2+).

It belongs to the picornaviruses polyprotein family. As to quaternary structure, interacts with capsid protein VP1 and capsid protein VP3 to form heterotrimeric protomers. Interacts with capsid protein VP0, and capsid protein VP3 to form heterotrimeric protomers. Five protomers subsequently associate to form pentamers which serve as building blocks for the capsid. Interacts with capsid protein VP2, capsid protein VP3 and capsid protein VP4 following cleavage of capsid protein VP0. Interacts with human PVR. In terms of assembly, interacts with capsid protein VP1 and capsid protein VP3 in the mature capsid. As to quaternary structure, interacts with capsid protein VP0 and capsid protein VP1 to form heterotrimeric protomers. Five protomers subsequently associate to form pentamers which serve as building blocks for the capsid. Interacts with capsid protein VP4 in the mature capsid. Interacts with protein 2C; this interaction may be important for virion morphogenesis. Interacts with capsid protein VP1 and capsid protein VP3. In terms of assembly, homodimer. As to quaternary structure, homohexamer; forms a hexameric ring structure with 6-fold symmetry characteristic of AAA+ ATPases. Interacts (via N-terminus) with host RTN3 (via reticulon domain); this interaction is important for viral replication. Interacts with capsid protein VP3; this interaction may be important for virion morphogenesis. Interacts with protein 3CD. In terms of assembly, homodimer. Interacts with host GBF1. Interacts (via GOLD domain) with host ACBD3 (via GOLD domain); this interaction allows the formation of a viral protein 3A/ACBD3 heterotetramer with a 2:2 stoichiometry, which will stimulate the recruitment of host PI4KB in order to synthesize PI4P at the viral RNA replication sites. As to quaternary structure, interacts with RNA-directed RNA polymerase. Interacts with protein 3AB and with RNA-directed RNA polymerase. In terms of assembly, interacts with Viral protein genome-linked and with protein 3CD. It depends on Mg(2+) as a cofactor. In terms of processing, specific enzymatic cleavages in vivo by the viral proteases yield processing intermediates and the mature proteins. Myristoylation is required for the formation of pentamers during virus assembly. Further assembly of 12 pentamers and a molecule of genomic RNA generates the provirion. Post-translationally, during virion maturation, immature virions are rendered infectious following cleavage of VP0 into VP4 and VP2. This maturation seems to be an autocatalytic event triggered by the presence of RNA in the capsid and it is followed by a conformational change infectious virion. In terms of processing, myristoylation is required during RNA encapsidation and formation of the mature virus particle. VPg is uridylylated by the polymerase into VPg-pUpU. This acts as a nucleotide-peptide primer for the genomic RNA replication.

It localises to the virion. It is found in the host cytoplasm. The protein localises to the host cytoplasmic vesicle membrane. Its subcellular location is the host nucleus. The enzyme catalyses RNA(n) + a ribonucleoside 5'-triphosphate = RNA(n+1) + diphosphate. It carries out the reaction Selective cleavage of Tyr-|-Gly bond in the picornavirus polyprotein.. It catalyses the reaction a ribonucleoside 5'-triphosphate + H2O = a ribonucleoside 5'-diphosphate + phosphate + H(+). The catalysed reaction is Selective cleavage of Gln-|-Gly bond in the poliovirus polyprotein. In other picornavirus reactions Glu may be substituted for Gln, and Ser or Thr for Gly.. Its activity is regulated as follows. Replication or transcription is subject to high level of random mutations by the nucleotide analog ribavirin. Forms an icosahedral capsid of pseudo T=3 symmetry with capsid proteins VP2 and VP3. The capsid is 300 Angstroms in diameter, composed of 60 copies of each capsid protein and enclosing the viral positive strand RNA genome. Capsid protein VP1 mainly forms the vertices of the capsid. Capsid protein VP1 interacts with host cell receptor PVR to provide virion attachment to target host epithelial cells. This attachment induces virion internalization predominantly through clathrin- and caveolin-independent endocytosis in Hela cells and through caveolin-mediated endocytosis in brain microvascular endothelial cells. Tyrosine kinases are probably involved in the entry process. Virus binding to PVR induces increased junctional permeability and rearrangement of junctional proteins. Modulation of endothelial tight junctions, as well as cytolytic infection of endothelial cells themselves, may result in loss of endothelial integrity which may help the virus to reach the CNS. After binding to its receptor, the capsid undergoes conformational changes. Capsid protein VP1 N-terminus (that contains an amphipathic alpha-helix) and capsid protein VP4 are externalized. Together, they shape a pore in the host membrane through which viral genome is translocated to host cell cytoplasm. Its function is as follows. Forms an icosahedral capsid of pseudo T=3 symmetry with capsid proteins VP1 and VP3. The capsid is 300 Angstroms in diameter, composed of 60 copies of each capsid protein and enclosing the viral positive strand RNA genome. In terms of biological role, forms an icosahedral capsid of pseudo T=3 symmetry with capsid proteins VP2 and VP1. The capsid is 300 Angstroms in diameter, composed of 60 copies of each capsid protein and enclosing the viral positive strand RNA genome. Functionally, lies on the inner surface of the capsid shell. After binding to the host receptor, the capsid undergoes conformational changes. Capsid protein VP4 is released, Capsid protein VP1 N-terminus is externalized, and together, they shape a pore in the host membrane through which the viral genome is translocated into the host cell cytoplasm. Component of immature procapsids, which is cleaved into capsid proteins VP4 and VP2 after maturation. Allows the capsid to remain inactive before the maturation step. Its function is as follows. Cysteine protease that cleaves viral polyprotein and specific host proteins. It is responsible for the autocatalytic cleavage between the P1 and P2 regions, which is the first cleavage occurring in the polyprotein. Also cleaves the host translation initiation factor EIF4G1, in order to shut down the capped cellular mRNA translation. Inhibits the host nucleus-cytoplasm protein and RNA trafficking by cleaving host members of the nuclear pores including NUP98, NUP62 and NUP153. Counteracts stress granule formation probably by antagonizing its assembly or promoting its dissassembly. Cleaves and inhibits host IFIH1/MDA5, thereby inhibiting the type-I IFN production and the establishment of the antiviral state. Cleaves and inhibits host MAVS, thereby inhibiting the type-I IFN production and the establishment of the antiviral state. In terms of biological role, plays an essential role in the virus replication cycle by acting as a viroporin. Creates a pore in the host endoplasmic reticulum and as a consequence releases Ca2+ in the cytoplasm of infected cell. In turn, high levels of cytoplasmic calcium may trigger membrane trafficking and transport of viral ER-associated proteins to viroplasms, sites of viral genome replication. Functionally, induces and associates with structural rearrangements of intracellular membranes. Displays RNA-binding, nucleotide binding and NTPase activities. May play a role in virion morphogenesis and viral RNA encapsidation by interacting with the capsid protein VP3. Localizes the viral replication complex to the surface of membranous vesicles. Together with protein 3CD binds the Cis-Active RNA Element (CRE) which is involved in RNA synthesis initiation. Acts as a cofactor to stimulate the activity of 3D polymerase, maybe through a nucleid acid chaperone activity. Its function is as follows. Localizes the viral replication complex to the surface of membranous vesicles. It inhibits host cell endoplasmic reticulum-to-Golgi apparatus transport and causes the disassembly of the Golgi complex, possibly through GBF1 interaction. This would result in depletion of MHC, trail receptors and IFN receptors at the host cell surface. Plays an essential role in viral RNA replication by recruiting ACBD3 and PI4KB at the viral replication sites, thereby allowing the formation of the rearranged membranous structures where viral replication takes place. In terms of biological role, acts as a primer for viral RNA replication and remains covalently bound to viral genomic RNA. VPg is uridylylated prior to priming replication into VPg-pUpU. The oriI viral genomic sequence may act as a template for this. The VPg-pUpU is then used as primer on the genomic RNA poly(A) by the RNA-dependent RNA polymerase to replicate the viral genome. During genome replication, the VPg-RNA linkage is removed by the host TDP2, thereby accelerating replication. During the late stage of the replication cycle, host TDP2 is excluded from sites of viral RNA synthesis and encapsidation, allowing for the generation of progeny virions. Functionally, involved in the viral replication complex and viral polypeptide maturation. It exhibits protease activity with a specificity and catalytic efficiency that is different from protease 3C. Protein 3CD binds to the 5'UTR of the viral genome. Major viral protease that mediates proteolytic processing of the polyprotein. Cleaves host EIF5B, contributing to host translation shutoff. Cleaves also host PABPC1, contributing to host translation shutoff. Cleaves host RIGI and thus contributes to the inhibition of type I interferon production. Cleaves host NLRP1, triggers host N-glycine-mediated degradation of the autoinhibitory NLRP1 N-terminal fragment. Inhibits the integrated stress response (ISR) in the infected cell by cleaving host G3BP1. Stress granule formation is thus inhibited, which allows protein synthesis and viral replication. Its function is as follows. Replicates the viral genomic RNA on the surface of intracellular membranes. May form linear arrays of subunits that propagate along a strong head-to-tail interaction called interface-I. Covalently attaches UMP to a tyrosine of VPg, which is used to prime RNA synthesis. The positive stranded RNA genome is first replicated at virus induced membranous vesicles, creating a dsRNA genomic replication form. This dsRNA is then used as template to synthesize positive stranded RNA genomes. ss(+)RNA genomes are either translated, replicated or encapsidated. This Homo sapiens (Human) protein is Genome polyprotein.